The chain runs to 121 residues: Trypsin/alpha-amylase inhibitor CMX1/CMX3 (121 aa).

The signal sequence occupies residues 1 to 24; sequence MAFKHQLILSTAILLAVLAAASAS.

The protein belongs to the protease inhibitor I6 (cereal trypsin/alpha-amylase inhibitor) family.

It localises to the secreted. This Triticum aestivum (Wheat) protein is Trypsin/alpha-amylase inhibitor CMX1/CMX3.